The following is a 137-amino-acid chain: Large ribosomal subunit protein uL16 (137 aa).

It belongs to the universal ribosomal protein uL16 family. Part of the 50S ribosomal subunit.

Functionally, binds 23S rRNA and is also seen to make contacts with the A and possibly P site tRNAs. This chain is Large ribosomal subunit protein uL16, found in Francisella tularensis subsp. tularensis (strain FSC 198).